Here is a 388-residue protein sequence, read N- to C-terminus: N-acetylneuraminate epimerase (388 aa).

The first 26 residues, 1–26 (MFSLIGAKRQAIGIAALAWSTGAVMA), serve as a signal peptide directing secretion. Kelch repeat units follow at residues 48 to 92 (MAYV…AAAG), 94 to 147 (KIFA…VGLA), 149 to 186 (GRIA…KLVD), 187 to 232 (SYMG…ATMG), 236 to 285 (FLLV…VAGA), 307 to 356 (ANAA…DAPG), and 358 to 387 (LLVV…LSVE).

The protein belongs to the NanM family. As to quaternary structure, homodimer.

It is found in the periplasm. The catalysed reaction is N-acetyl-alpha-neuraminate = N-acetyl-beta-neuraminate. Its function is as follows. Converts alpha-N-acetylneuranimic acid (Neu5Ac) to the beta-anomer, accelerating the equilibrium between the alpha- and beta-anomers. Probably facilitates sialidase-negative bacteria to compete successfully for limited amounts of extracellular Neu5Ac, which is likely taken up in the beta-anomer. In addition, the rapid removal of sialic acid from solution might be advantageous to the bacterium to damp down host responses. The chain is N-acetylneuraminate epimerase from Brucella suis (strain ATCC 23445 / NCTC 10510).